The chain runs to 564 residues: Benomyl/methotrexate resistance protein (564 aa).

The interval 60-101 is disordered; the sequence is IDNQGEPNSSQSSSSNNTIVDNNNNNNNDVDGDKIVVTWDGD. Over residues 67–88 the composition is skewed to low complexity; the sequence is NSSQSSSSNNTIVDNNNNNNND. A run of 12 helical transmembrane segments spans residues 116–136, 153–173, 184–204, 210–229, 241–262, 274–294, 358–374, 393–411, 431–451, 457–476, 489–506, and 530–551; these read AFFI…SAVY, VATL…LVFS, TSIY…TALV, LCIL…ATGG, LPVG…GPFF, WTFW…CFTL, IYIA…FEVF, YMSI…IPVI, IPIA…FGWS, HWVG…FLIF, PHYI…RSVI, and WGSS…LFYL.

This sequence belongs to the major facilitator superfamily. CAR1 family.

The protein resides in the membrane. Probable transporter. Confers resistance to benomyl and methotrexate. In Candida albicans (Yeast), this protein is Benomyl/methotrexate resistance protein (MDR1).